The following is a 273-amino-acid chain: Dermonecrotic toxin LspiSicTox-betaIE1ii (273 aa).

The active site involves His-5. Mg(2+)-binding residues include Glu-25 and Asp-27. His-41 acts as the Nucleophile in catalysis. Intrachain disulfides connect Cys-45-Cys-51 and Cys-47-Cys-189. Asp-85 serves as a coordination point for Mg(2+).

This sequence belongs to the arthropod phospholipase D family. Class II subfamily. Mg(2+) serves as cofactor. Expressed by the venom gland.

It is found in the secreted. It carries out the reaction an N-(acyl)-sphingosylphosphocholine = an N-(acyl)-sphingosyl-1,3-cyclic phosphate + choline. It catalyses the reaction an N-(acyl)-sphingosylphosphoethanolamine = an N-(acyl)-sphingosyl-1,3-cyclic phosphate + ethanolamine. The catalysed reaction is a 1-acyl-sn-glycero-3-phosphocholine = a 1-acyl-sn-glycero-2,3-cyclic phosphate + choline. The enzyme catalyses a 1-acyl-sn-glycero-3-phosphoethanolamine = a 1-acyl-sn-glycero-2,3-cyclic phosphate + ethanolamine. Dermonecrotic toxins cleave the phosphodiester linkage between the phosphate and headgroup of certain phospholipids (sphingolipid and lysolipid substrates), forming an alcohol (often choline) and a cyclic phosphate. This toxin acts on sphingomyelin (SM). It may also act on ceramide phosphoethanolamine (CPE), lysophosphatidylcholine (LPC) and lysophosphatidylethanolamine (LPE), but not on lysophosphatidylserine (LPS), and lysophosphatidylglycerol (LPG). It acts by transphosphatidylation, releasing exclusively cyclic phosphate products as second products. Induces dermonecrosis, hemolysis, increased vascular permeability, edema, inflammatory response, and platelet aggregation. In Loxosceles spinulosa (Recluse spider), this protein is Dermonecrotic toxin LspiSicTox-betaIE1ii.